Here is a 427-residue protein sequence, read N- to C-terminus: Phosphatidylglycerol--prolipoprotein diacylglyceryl transferase (427 aa).

4 consecutive transmembrane segments (helical) span residues 21-41 (VPIR…LLIG), 53-73 (GVIY…GRLY), 96-116 (IWDG…GAWI), and 122-142 (GIPL…AQAI). Position 144 (arginine 144) interacts with a 1,2-diacyl-sn-glycero-3-phospho-(1'-sn-glycerol). Helical transmembrane passes span 189–209 (VALV…LIFV) and 256–276 (INSF…MAAP). The tract at residues 280–427 (EDPESLRGNQ…ARLRERLSGR (148 aa)) is disordered. Residues 299 to 330 (EPATVAATTEAATEGVAAPADGAEAAGADATA) show a composition bias toward low complexity. Residues 332–346 (RPEESAEPDVEKPES) show a composition bias toward basic and acidic residues. The segment covering 347 to 404 (EETEAAEEASEPEAEEPEAPEAEEPEEPETEEPEADSGEEPEEESGEAPEQLVAEEPE) has biased composition (acidic residues). Over residues 411 to 427 (ETKRRWGARLRERLSGR) the composition is skewed to basic and acidic residues.

The protein belongs to the Lgt family.

It localises to the cell membrane. The catalysed reaction is L-cysteinyl-[prolipoprotein] + a 1,2-diacyl-sn-glycero-3-phospho-(1'-sn-glycerol) = an S-1,2-diacyl-sn-glyceryl-L-cysteinyl-[prolipoprotein] + sn-glycerol 1-phosphate + H(+). It functions in the pathway protein modification; lipoprotein biosynthesis (diacylglyceryl transfer). Its function is as follows. Catalyzes the transfer of the diacylglyceryl group from phosphatidylglycerol to the sulfhydryl group of the N-terminal cysteine of a prolipoprotein, the first step in the formation of mature lipoproteins. The sequence is that of Phosphatidylglycerol--prolipoprotein diacylglyceryl transferase from Mycolicibacterium paratuberculosis (strain ATCC BAA-968 / K-10) (Mycobacterium paratuberculosis).